We begin with the raw amino-acid sequence, 219 residues long: Ribose-5-phosphate isomerase A (219 aa).

Substrate contacts are provided by residues 28–31 (TGST), 81–84 (DGAD), and 94–97 (KGGG). The active-site Proton acceptor is Glu103. Residue Lys121 coordinates substrate.

This sequence belongs to the ribose 5-phosphate isomerase family. As to quaternary structure, homodimer.

It catalyses the reaction aldehydo-D-ribose 5-phosphate = D-ribulose 5-phosphate. It participates in carbohydrate degradation; pentose phosphate pathway; D-ribose 5-phosphate from D-ribulose 5-phosphate (non-oxidative stage): step 1/1. Functionally, catalyzes the reversible conversion of ribose-5-phosphate to ribulose 5-phosphate. This Edwardsiella ictaluri (strain 93-146) protein is Ribose-5-phosphate isomerase A.